The chain runs to 476 residues: Argininosuccinate lyase (476 aa).

This sequence belongs to the lyase 1 family. Argininosuccinate lyase subfamily.

It localises to the cytoplasm. The enzyme catalyses 2-(N(omega)-L-arginino)succinate = fumarate + L-arginine. Its pathway is amino-acid biosynthesis; L-arginine biosynthesis; L-arginine from L-ornithine and carbamoyl phosphate: step 3/3. This chain is Argininosuccinate lyase, found in Thermobifida fusca (strain YX).